The chain runs to 332 residues: L-lactate dehydrogenase A chain (332 aa).

Alanine 2 bears the N-acetylalanine mark. Residue lysine 5 is modified to N6-acetyllysine; alternate. Lysine 5 is subject to N6-succinyllysine; alternate. Residue lysine 14 is modified to N6-acetyllysine. Threonine 18 is subject to Phosphothreonine. 29–57 (GAVGMACAISILMKDLADELALVDVIEDK) contributes to the NAD(+) binding site. Lysine 57 carries the N6-acetyllysine; alternate modification. Lysine 57 participates in a covalent cross-link: Glycyl lysine isopeptide (Lys-Gly) (interchain with G-Cter in SUMO2); alternate. Position 81 is an N6-acetyllysine (lysine 81). Residue arginine 99 coordinates NAD(+). Arginine 106 is a binding site for substrate. Lysine 118 carries the post-translational modification N6-acetyllysine; alternate. The residue at position 118 (lysine 118) is an N6-succinyllysine; alternate. Lysine 126 carries the post-translational modification N6-acetyllysine. Substrate-binding residues include asparagine 138 and arginine 169. The active-site Proton acceptor is histidine 193. Residues lysine 224 and lysine 232 each carry the N6-acetyllysine modification. Phosphotyrosine is present on tyrosine 239. The residue at position 243 (lysine 243) is an N6-acetyllysine. Threonine 248 lines the substrate pocket. At threonine 309 the chain carries Phosphothreonine. Position 310 is a phosphoserine (serine 310). At lysine 318 the chain carries N6-acetyllysine; alternate. Residue lysine 318 is modified to N6-succinyllysine; alternate. Phosphothreonine is present on threonine 322.

It belongs to the LDH/MDH superfamily. LDH family. Homotetramer. Interacts with PTEN upstream reading frame protein MP31. In terms of processing, ISGylated.

The protein resides in the cytoplasm. It catalyses the reaction (S)-lactate + NAD(+) = pyruvate + NADH + H(+). The protein operates within fermentation; pyruvate fermentation to lactate; (S)-lactate from pyruvate: step 1/1. Functionally, interconverts simultaneously and stereospecifically pyruvate and lactate with concomitant interconversion of NADH and NAD(+). The sequence is that of L-lactate dehydrogenase A chain (LDHA) from Pongo abelii (Sumatran orangutan).